A 488-amino-acid polypeptide reads, in one-letter code: Histamine H1 receptor (488 aa).

The Extracellular portion of the chain corresponds to 1–29; the sequence is MSLPNTSSASEDKMCEGNRTAMASPQLLP. Asparagine 5 and asparagine 18 each carry an N-linked (GlcNAc...) asparagine glycan. Residues 30-50 traverse the membrane as a helical segment; the sequence is LVVVLSSISLVTVGLNLLVLY. Residues 51 to 64 are Cytoplasmic-facing; that stretch reads AVRSERKLHTVGNL. A helical transmembrane segment spans residues 65 to 89; it reads YIVSLSVADLIVGAVVMPMNILYLI. Over 90 to 97 the chain is Extracellular; sequence MTKWSLGR. Residues 98–123 traverse the membrane as a helical segment; the sequence is PLCLFWLSMDYVASTASIFSVFILCI. Cysteine 100 and cysteine 180 are disulfide-bonded. The histamine site is built by aspartate 107 and threonine 112. The tract at residues 107–112 is important for agonist binding; that stretch reads DYVAST. The Cytoplasmic portion of the chain corresponds to 124-144; that stretch reads DRYRSVQQPLRYLRYRTKTRA. Threonine 140 and threonine 142 each carry phosphothreonine. Residues 145–164 form a helical membrane-spanning segment; the sequence is SATILGAWFLSFLWVIPILG. At 165 to 188 the chain is on the extracellular side; the sequence is WHHFTPLAPELREDKCETDFYNVT. A helical transmembrane segment spans residues 189 to 211; it reads WFKIMTAIINFYLPTLLMLWFYV. Asparagine 198 contacts histamine. Residues 212–417 are Cytoplasmic-facing; that stretch reads KIYKAVRRHC…LNRERKAAKQ (206 aa). The residue at position 230 (serine 230) is a Phosphoserine. The tract at residues 245–337 is disordered; it reads KEGAKKPGKE…SQPKMDEQSL (93 aa). The span at 322–337 shows a compositional bias: polar residues; sequence ANDQTLSQPKMDEQSL. Residues serine 344, serine 347, serine 381, serine 383, serine 397, and serine 399 each carry the phosphoserine modification. A helical membrane pass occupies residues 418 to 441; that stretch reads LGCIMAAFILCWIPYFIFFMVIAF. Residues 425–429 are important for agonist binding; the sequence is FILCW. Tyrosine 432 contacts histamine. Cysteines 442 and 445 form a disulfide. Residues 442–447 are Extracellular-facing; it reads CNSCCS. The chain crosses the membrane as a helical span at residues 448-470; sequence EPVHMFTIWLGYINSTLNPLIYP. The Cytoplasmic portion of the chain corresponds to 471-488; the sequence is LCNENFKKTFKKILHIRS.

The protein belongs to the G-protein coupled receptor 1 family. In terms of processing, phosphorylation at sites in the second and third cytoplasmic loops independently contribute to agonist-induced receptor down-regulation.

The protein resides in the cell membrane. In terms of biological role, G-protein-coupled receptor for histamine, a biogenic amine that functions as an immune modulator and a neurotransmitter. Through the H1 receptor, histamine mediates the contraction of smooth muscles and increases capillary permeability due to contraction of terminal venules. Also mediates neurotransmission in the central nervous system and thereby regulates circadian rhythms, emotional and locomotor activities as well as cognitive functions. This chain is Histamine H1 receptor, found in Mus musculus (Mouse).